We begin with the raw amino-acid sequence, 307 residues long: Putative transcription factor bHLH086 (307 aa).

Disordered regions lie at residues 1 to 49 and 167 to 215; these read MSLI…DHQN and HEST…QSLA. Polar residues-rich tracts occupy residues 12 to 28 and 183 to 197; these read NYIS…SPQN and GENT…SGTN. The tract at residues 207–220 is basic motif; it reads SPKDPQSLAAKNRR. One can recognise a bHLH domain in the interval 207-256; that stretch reads SPKDPQSLAAKNRRERISERLKVLQELVPNGTKVDLVTMLEKAIGYVKFL. The segment at 221–256 is helix-loop-helix motif; sequence ERISERLKVLQELVPNGTKVDLVTMLEKAIGYVKFL.

Homodimer. Forms heterodimers with RHD6. Interacts with TIFY10B/JAZ2, TIFY6A/JAZ4, TIFY5A/JAZ8, TIFY7/JAZ9 and TIFY9/JAZ10.

Its subcellular location is the nucleus. Its function is as follows. Transcription factor that is specifically required for the development of root hairs. Acts with RHD6 to positively regulate root hair development. Acts downstream of genes that regulate epidermal pattern formation, such as GL2. Acts with RHD6 as transcription factor that integrates a jasmonate (JA) signaling pathway that stimulates root hair growth. The protein is Putative transcription factor bHLH086 of Arabidopsis thaliana (Mouse-ear cress).